The primary structure comprises 129 residues: Large ribosomal subunit protein bL12 (129 aa).

The protein belongs to the bacterial ribosomal protein bL12 family. Homodimer. Part of the ribosomal stalk of the 50S ribosomal subunit. Forms a multimeric L10(L12)X complex, where L10 forms an elongated spine to which 2 to 4 L12 dimers bind in a sequential fashion. Binds GTP-bound translation factors.

Its function is as follows. Forms part of the ribosomal stalk which helps the ribosome interact with GTP-bound translation factors. Is thus essential for accurate translation. This chain is Large ribosomal subunit protein bL12, found in Thermosipho melanesiensis (strain DSM 12029 / CIP 104789 / BI429).